A 297-amino-acid chain; its full sequence is Coatomer subunit epsilon-2 (297 aa).

This sequence belongs to the COPE family. In terms of assembly, oligomeric complex that consists of at least the alpha, beta, beta', gamma, delta, epsilon and zeta subunits.

Its subcellular location is the cytoplasm. The protein localises to the golgi apparatus membrane. The protein resides in the cytoplasmic vesicle. It is found in the COPI-coated vesicle membrane. Its function is as follows. The coatomer is a cytosolic protein complex that binds to dilysine motifs and reversibly associates with Golgi non-clathrin-coated vesicles, which further mediate biosynthetic protein transport from the ER, via the Golgi up to the trans Golgi network. The coatomer complex is required for budding from Golgi membranes, and is essential for the retrograde Golgi-to-ER transport of dilysine-tagged proteins. The chain is Coatomer subunit epsilon-2 from Oryza sativa subsp. indica (Rice).